The primary structure comprises 492 residues: Catalase (492 aa).

Active-site residues include histidine 65 and asparagine 138. Tyrosine 348 contributes to the heme binding site.

It belongs to the catalase family. In terms of assembly, homotetramer. Heme is required as a cofactor.

The protein resides in the cytoplasm. It is found in the cytosol. The protein localises to the peroxisome matrix. It carries out the reaction 2 H2O2 = O2 + 2 H2O. Its function is as follows. Catalyzes the degradation of hydrogen peroxide (H(2)O(2)) generated by peroxisomal oxidases to water and oxygen, thereby protecting cells from the toxic effects of hydrogen peroxide. This is Catalase from Ipomoea batatas (Sweet potato).